A 187-amino-acid chain; its full sequence is UPF0301 protein CKO_04323 (187 aa).

The protein belongs to the UPF0301 (AlgH) family.

The protein is UPF0301 protein CKO_04323 of Citrobacter koseri (strain ATCC BAA-895 / CDC 4225-83 / SGSC4696).